The sequence spans 469 residues: Alpha,alpha-trehalose-phosphate synthase [UDP-forming] (469 aa).

D-glucose 6-phosphate contacts are provided by Y87 and D141. UDP contacts are provided by R279 and K284. R279 and K284 together coordinate UDP-alpha-D-glucose. R317 contributes to the D-glucose 6-phosphate binding site. 378–386 (DGMNLVSYE) serves as a coordination point for UDP-alpha-D-glucose. 382–386 (LVSYE) provides a ligand contact to UDP.

It belongs to the glycosyltransferase 20 family.

The catalysed reaction is D-glucose 6-phosphate + UDP-alpha-D-glucose = alpha,alpha-trehalose 6-phosphate + UDP + H(+). The protein operates within carbohydrate biosynthesis. Synthase catalytic subunit of the trehalose synthase complex that catalyzes the production of trehalose from glucose-6-phosphate and UDP-alpha-D-glucose in a two step process. The disaccharide trehalose serves as a storage carbohydrate that is mobilized during spore germination. The sequence is that of Alpha,alpha-trehalose-phosphate synthase [UDP-forming] from Yarrowia lipolytica (strain CLIB 122 / E 150) (Yeast).